A 264-amino-acid chain; its full sequence is Hydroxyethylthiazole kinase (264 aa).

Methionine 47 serves as a coordination point for substrate. 2 residues coordinate ATP: arginine 123 and serine 169. Glycine 196 lines the substrate pocket.

Belongs to the Thz kinase family. Mg(2+) is required as a cofactor.

The catalysed reaction is 5-(2-hydroxyethyl)-4-methylthiazole + ATP = 4-methyl-5-(2-phosphooxyethyl)-thiazole + ADP + H(+). The protein operates within cofactor biosynthesis; thiamine diphosphate biosynthesis; 4-methyl-5-(2-phosphoethyl)-thiazole from 5-(2-hydroxyethyl)-4-methylthiazole: step 1/1. In terms of biological role, catalyzes the phosphorylation of the hydroxyl group of 4-methyl-5-beta-hydroxyethylthiazole (THZ). The protein is Hydroxyethylthiazole kinase of Brachyspira hyodysenteriae (strain ATCC 49526 / WA1).